We begin with the raw amino-acid sequence, 206 residues long: tRNA(Phe) 7-((3-amino-3-carboxypropyl)-4-demethylwyosine(37)-N(4))-methyltransferase 2 (206 aa).

The protein belongs to the TYW3 family.

The catalysed reaction is 4-demethyl-7-[(3S)-3-amino-3-carboxypropyl]wyosine(37) in tRNA(Phe) + S-adenosyl-L-methionine = 7-[(3S)-3-amino-3-carboxypropyl]wyosine(37) in tRNA(Phe) + S-adenosyl-L-homocysteine + H(+). Functionally, S-adenosyl-L-methionine-dependent methyltransferase that acts as a component of the wyosine derivatives biosynthesis pathway. Probably methylates N-4 position of wybutosine-86 to produce wybutosine-72. This chain is tRNA(Phe) 7-((3-amino-3-carboxypropyl)-4-demethylwyosine(37)-N(4))-methyltransferase 2, found in Pyrococcus abyssi (strain GE5 / Orsay).